The chain runs to 82 residues: Small ribosomal subunit protein uS17 (82 aa).

Belongs to the universal ribosomal protein uS17 family. In terms of assembly, part of the 30S ribosomal subunit.

In terms of biological role, one of the primary rRNA binding proteins, it binds specifically to the 5'-end of 16S ribosomal RNA. This Azorhizobium caulinodans (strain ATCC 43989 / DSM 5975 / JCM 20966 / LMG 6465 / NBRC 14845 / NCIMB 13405 / ORS 571) protein is Small ribosomal subunit protein uS17.